A 278-amino-acid chain; its full sequence is uncharacterized protein (278 aa).

Residues 251-278 (TLSENKKQKSSSTSPETDSDMSEFFGDN) are disordered.

This is an uncharacterized protein from Aedes pseudoscutellaris reovirus (isolate France) (ApRV).